Consider the following 188-residue polypeptide: NAD(P)H-quinone oxidoreductase subunit J (188 aa).

The segment covering Met1–Ser12 has biased composition (polar residues). The tract at residues Met1 to Pro23 is disordered.

This sequence belongs to the complex I 30 kDa subunit family. NDH-1 can be composed of about 15 different subunits; different subcomplexes with different compositions have been identified which probably have different functions.

It is found in the cellular thylakoid membrane. It carries out the reaction a plastoquinone + NADH + (n+1) H(+)(in) = a plastoquinol + NAD(+) + n H(+)(out). The catalysed reaction is a plastoquinone + NADPH + (n+1) H(+)(in) = a plastoquinol + NADP(+) + n H(+)(out). Functionally, NDH-1 shuttles electrons from an unknown electron donor, via FMN and iron-sulfur (Fe-S) centers, to quinones in the respiratory and/or the photosynthetic chain. The immediate electron acceptor for the enzyme in this species is believed to be plastoquinone. Couples the redox reaction to proton translocation, and thus conserves the redox energy in a proton gradient. Cyanobacterial NDH-1 also plays a role in inorganic carbon-concentration. In Synechococcus sp. (strain CC9605), this protein is NAD(P)H-quinone oxidoreductase subunit J.